The sequence spans 337 residues: Glyceraldehyde-3-phosphate dehydrogenase (337 aa).

Residues 12-13, D34, and K79 each bind NAD(+); that span reads RI. Residues 150 to 152, T181, 210 to 211, and R233 each bind D-glyceraldehyde 3-phosphate; these read SCT and TG. The Nucleophile role is filled by C151. An NAD(+)-binding site is contributed by N315.

The protein belongs to the glyceraldehyde-3-phosphate dehydrogenase family. As to quaternary structure, homotetramer. As to expression, expressed in all tissues examined.

It localises to the cytoplasm. It carries out the reaction D-glyceraldehyde 3-phosphate + phosphate + NAD(+) = (2R)-3-phospho-glyceroyl phosphate + NADH + H(+). It functions in the pathway carbohydrate degradation; glycolysis; pyruvate from D-glyceraldehyde 3-phosphate: step 1/5. The protein is Glyceraldehyde-3-phosphate dehydrogenase (gpd) of Lentinula edodes (Shiitake mushroom).